The primary structure comprises 759 residues: TIR domain-containing adapter molecule 1 (759 aa).

Residues 1 to 153 form a TRIF-NTD region; it reads MACTGPSLSG…CGWDVLGDLG (153 aa). Positions 84–91 match the TRAF6-binding motif; the sequence is ETPEEPPD. A pLxIS motif motif is present at residues 207–210; the sequence is LEIS. Position 210 is a phosphoserine (Ser-210). A Glycyl lysine isopeptide (Lys-Gly) (interchain with G-Cter in ubiquitin) cross-link involves residue Lys-229. Residues 241-296 are disordered; sequence EPAPMGCQEPEEMSWPPSVEAADSPVRPSSPGPGLPEVTTDACPASPHDPPEVPEI. Short sequence motifs (TRAF6-binding) lie at residues 248–255 and 299–309; these read QEPEEMSW and HYPVECTDVPA. The segment at 340–426 is disordered; it reads LSAQPRPPTP…PEPPPPELES (87 aa). Positions 351 to 365 are enriched in low complexity; the sequence is VPQTSPSFPSASTSP. Residues 366-376 show a composition bias toward pro residues; the sequence is FPSPSTPPEAH. Residues 430–590 enclose the TIR domain; sequence KFYNFVVLHA…QDARALREQS (161 aa). Residues 549 to 759 form a sufficient to induce apoptosis region; that stretch reads LLDEHSKIFA…APEDNTRETE (211 aa). The segment at 642–723 is disordered; it reads GQGSLGTPPS…PPARPQSPGL (82 aa). Residues 659 to 705 show a composition bias toward pro residues; the sequence is HQPPPLPPWLGGTPPPIFPQPPQTFPQPPPTFPQPPPTFQQPPPACP.

In terms of assembly, homodimer. Found in a multi-helicase-TICAM1 complex at least composed of DHX36, DDX1, DDX21 and TICAM1; this complex exists in resting cells with or without poly(I:C) RNA ligand stimulation. Interacts (via TIR domain) with DDX21 (via C-terminus). Interacts (via TIR domain) with DHX36 (via C-terminus). Interacts with AZI2 and IRF7. Interacts with TICAM2 in TLR4 recruitment. Interaction with PIAS4 inhibits the TICAM1-induced NF-kappa-B, IRF and IFNB1 activation. Interacts with IKBKB and IKBKE. Interaction with SARM1 blocks TICAM1-dependent transcription factor activation. Interacts with TRAF3. Interacts (when phosphorylated) with IRF3; following activation and phosphorylation on the pLxIS motif by TBK1, recruits IRF3. Interacts with TBK1, TRAF6 and RIPK1 and these interactions are enhanced in the presence of WDFY1. Interacts with TRAFD1. Interacts with UBQLN1 (via UBA domain). Interacts with TLR4 in response to LPS in a WDFY1-dependent manner. Interacts with WDFY1 in response to poly(I:C). Interacts (via the TIR domain) with TLR3 in response to poly(I:C) and this interaction is enhanced in the presence of WDFY1. Interacts with TRIM56. Component of a multi-helicase-TICAM1 complex that acts as a cytoplasmic sensor of viral double-stranded RNA (dsRNA) and plays a role in the activation of a cascade of antiviral responses including the induction of pro-inflammatory cytokines. Interacts (via the TIR domain) with TLR5. Interacts with TRIM8. Interacts with TAX1BP1 and TRIM32; these interactions target TICAM1 to TAX1BP1-mediated selective autophagic degradation. Interacts with DDX50. In terms of processing, phosphorylated by TBK1. Following activation, phosphorylated by TBK1 at Ser-210 in the pLxIS motif. The phosphorylated pLxIS motif constitutes an IRF3-binding motif, leading to recruitment of the transcription factor IRF3 to induce type-I interferons and other cytokines. Polyubiquitinated at Lys-229 by TRIM38 with 'Lys-48'-linked chains, leading to proteasomal degradation. Polyubiquitinated with 'Lys-6' and 'Lys-33'-linked chains in a TRIM8-dependent manner.

It is found in the cytoplasmic vesicle. It localises to the autophagosome. The protein localises to the cytoplasm. Its subcellular location is the cytosol. The protein resides in the mitochondrion. In terms of biological role, involved in innate immunity against invading pathogens. Adapter used by TLR3, TLR4 (through TICAM2) and TLR5 to mediate NF-kappa-B and interferon-regulatory factor (IRF) activation, and to induce apoptosis. Ligand binding to these receptors results in TRIF recruitment through its TIR domain. Distinct protein-interaction motifs allow recruitment of the effector proteins TBK1, TRAF6 and RIPK1, which in turn, lead to the activation of transcription factors IRF3 and IRF7, NF-kappa-B and FADD respectively. Phosphorylation by TBK1 on the pLxIS motif leads to recruitment and subsequent activation of the transcription factor IRF3 to induce expression of type I interferon and exert a potent immunity against invading pathogens. Component of a multi-helicase-TICAM1 complex that acts as a cytoplasmic sensor of viral double-stranded RNA (dsRNA) and plays a role in the activation of a cascade of antiviral responses including the induction of pro-inflammatory cytokines. This Bos taurus (Bovine) protein is TIR domain-containing adapter molecule 1 (TICAM1).